The primary structure comprises 82 residues: RNA-binding protein Hfq (82 aa).

The region spanning 10–70 (DIFLNGARKN…LSTITPSKAI (61 aa)) is the Sm domain.

This sequence belongs to the Hfq family. In terms of assembly, homohexamer.

In terms of biological role, RNA chaperone that binds small regulatory RNA (sRNAs) and mRNAs to facilitate mRNA translational regulation in response to envelope stress, environmental stress and changes in metabolite concentrations. Also binds with high specificity to tRNAs. The polypeptide is RNA-binding protein Hfq (Clostridium kluyveri (strain NBRC 12016)).